The sequence spans 262 residues: MTNYGLVIDQERCIGCQSCSLTCKQENNVPMGQFWNRVLTQGGDHVDTPSGDYPEGGDGGTLEMTYQPTACQHCENAPCVKVCPVNATYTRDDGIVEIDYDKCMGCRYCMAACPYNARVFNWDEPEHRPEDGTGDVAERPQGVVEKCTFCSHRVEDGLDPACVVNCPADARIFGDLDDDDSTVSKYIAEYDTHQLLDEKGTDPSTYYINGEMSPGRPWKSKKLESELDDDEAAKAARRRSGSVENGYDVTPHVPAETAGGDD.

4Fe-4S ferredoxin-type domains follow at residues 4 to 34 (YGLV…MGQF), 62 to 93 (LEMT…TRDD), and 94 to 123 (GIVE…FNWD). Residues Cys-13, Cys-16, Cys-19, Cys-23, Cys-71, Cys-74, Cys-79, Cys-83, Cys-103, Cys-106, Cys-109, Cys-113, Cys-147, Cys-150, Cys-162, and Cys-166 each contribute to the [4Fe-4S] cluster site. Residues 209–262 (NGEMSPGRPWKSKKLESELDDDEAAKAARRRSGSVENGYDVTPHVPAETAGGDD) are disordered.

As to quaternary structure, probable multiprotein complex that likely consists of DmsA, DmsB and DmsC. [4Fe-4S] cluster serves as cofactor.

It is found in the cell membrane. In terms of biological role, dimethyl sulfoxide (DMSO) reductase catalyzes the reduction of dimethyl sulfoxide (DMSO) to dimethyl sulfide (DMS) during anaerobic respiration; it can also use trimethylamine N-oxide (TMAO) as terminal electron acceptor. Subunit B is proposed to be involved in electron transfer. The chain is Putative dimethyl sulfoxide reductase iron-sulfur subunit B (dmsB) from Halobacterium salinarum (strain ATCC 700922 / JCM 11081 / NRC-1) (Halobacterium halobium).